A 163-amino-acid polypeptide reads, in one-letter code: Large ribosomal subunit protein bL21 (163 aa).

Residues 124–163 form a disordered region; that stretch reads KETTKKTKATVSIKKTAKKPSEKKSAPQKKAAVVSNNKED.

It belongs to the bacterial ribosomal protein bL21 family. As to quaternary structure, part of the 50S ribosomal subunit. Contacts protein L20.

Its function is as follows. This protein binds to 23S rRNA in the presence of protein L20. This is Large ribosomal subunit protein bL21 from Bartonella quintana (strain Toulouse) (Rochalimaea quintana).